Reading from the N-terminus, the 374-residue chain is Probable quinol oxidase subunit 2 (374 aa).

The signal sequence occupies residues 1-19; the sequence is MSKFKSLLLMFGTLILLSG. Cysteine 20 carries N-palmitoyl cysteine lipidation. Residue cysteine 20 is the site of S-diacylglycerol cysteine attachment. 2 helical membrane passes run 43–63 and 82–102; these read SIIF…IFIF and IETI…IPTV. Positions 321-374 are disordered; it reads MKPMILGNNDPYDNEFKKEEDHNSKEMEKISKSAKDENASKFGSKADNDHGGGH. Basic and acidic residues predominate over residues 334–374; it reads NEFKKEEDHNSKEMEKISKSAKDENASKFGSKADNDHGGGH.

The protein belongs to the cytochrome c oxidase subunit 2 family.

It localises to the cell membrane. The enzyme catalyses 2 a quinol + O2 = 2 a quinone + 2 H2O. Catalyzes quinol oxidation with the concomitant reduction of oxygen to water. Subunit II transfers the electrons from a quinol to the binuclear center of the catalytic subunit I. This is Probable quinol oxidase subunit 2 (qoxA) from Staphylococcus haemolyticus (strain JCSC1435).